An 838-amino-acid polypeptide reads, in one-letter code: DNA gyrase subunit A (838 aa).

Thr2 bears the N-acetylthreonine mark. Residues 41 to 510 (LPEVRDGLKP…ADGDVSDEDL (470 aa)) form the Topo IIA-type catalytic domain. Residue Tyr129 is the O-(5'-phospho-DNA)-tyrosine intermediate of the active site. Ca(2+)-binding residues include Asp504, Ser506, Glu508, and Asp515. The EF-hand domain maps to 504-516 (DVSDEDLIAREDV). Positions 514-838 (EDVVVTITET…DANGADQTGN (325 aa)) are C-terminal domain CTD. Positions 537–543 (QKRGGKG) match the GyrA-box motif. Residues 743–749 (QGRGGKG) carry the GyrA-box-1 motif.

Belongs to the type II topoisomerase GyrA/ParC subunit family. As to quaternary structure, heterotetramer, composed of two GyrA and two GyrB chains. In the heterotetramer, GyrA contains the active site tyrosine that forms a transient covalent intermediate with DNA, while GyrB binds cofactors and catalyzes ATP hydrolysis. Ca(2+) is required as a cofactor.

It is found in the cytoplasm. The catalysed reaction is ATP-dependent breakage, passage and rejoining of double-stranded DNA.. Its activity is regulated as follows. DNA supercoiling inhibited by (fluoro)quinoline antibiotics such as sparfloxacin and levofloxacin, which usually act on GyrA. DNA supercoiling inhibited by the coumarin antibiotic novobiocin which acts on GyrB. Quinolones lead to gyrase-mediated dsDNA cleavage while preventing reclosure. DNA supercoiling activity inhibited by aminopyrazinamide and pyrrolamide derivatives, probably via effects on the GyrB subunit. DNA relaxation inhibited by ATP and its analogs. DNA supercoiling, relaxation, decatenation and quinolone-promoted DNA cleavage are inhibited by MfpA (50% inhibition occurs at 2 uM), inhibition of gyrase activities is enhanced in a concentration-dependent manner by MfpA. A type II topoisomerase that negatively supercoils closed circular double-stranded (ds) DNA in an ATP-dependent manner to maintain chromosomes in an underwound state, while in the absence of ATP it relaxes supercoiled dsDNA. Also catalyzes the interconversion of other topological isomers of dsDNA rings, including catenanes. Gyrase from M.tuberculosis has higher decatenation than supercoiling activity compared to E.coli; as M.tuberculosis only has 1 type II topoisomerase, gyrase has to fulfill the decatenation function of topoisomerase IV as well. At comparable concentrations M.tuberculosis gyrase cannot introduce as many negative supercoils into DNA as the E.coli enzyme, and its ATPase activity is lower, perhaps because it does not couple DNA wrapping and ATP binding as well as E.coli. Its function is as follows. Negative supercoiling favors strand separation, and DNA replication, transcription, recombination and repair, all of which involve strand separation. Type II topoisomerases break and join 2 DNA strands simultaneously in an ATP-dependent manner. This Mycobacterium tuberculosis (strain ATCC 25618 / H37Rv) protein is DNA gyrase subunit A.